The chain runs to 200 residues: Recombination protein RecR (200 aa).

The segment at 59-74 (CSVCGSLDTSDPCAIC) adopts a C4-type zinc-finger fold. Residues 82-177 (RLLCVVEEVG…SVTMLARGVP (96 aa)) enclose the Toprim domain.

Belongs to the RecR family.

May play a role in DNA repair. It seems to be involved in an RecBC-independent recombinational process of DNA repair. It may act with RecF and RecO. The sequence is that of Recombination protein RecR from Caulobacter sp. (strain K31).